The primary structure comprises 280 residues: 3-hydroxyacyl-thioester dehydratase X (280 aa).

Positions Gln-149–Pro-170 are disordered. The MaoC-like domain occupies Gln-162–Asp-256.

It belongs to the enoyl-CoA hydratase/isomerase family.

It catalyses the reaction a (3R)-3-hydroxyacyl-CoA = a (2E)-enoyl-CoA + H2O. The enzyme catalyses (2E)-octenoyl-CoA + H2O = (3R)-hydroxyoctanoyl-CoA. The catalysed reaction is (3R)-3-hydroxydodecanoyl-CoA = (2E)-dodecenoyl-CoA + H2O. It carries out the reaction (3R)-hydroxyhexadecanoyl-CoA = (2E)-hexadecenoyl-CoA + H2O. It catalyses the reaction (3R)-hydroxyeicosanoyl-CoA = (2E)-eicosenoyl-CoA + H2O. The enzyme catalyses (3R)-3-hydroxybutanoyl-CoA = (2E)-butenoyl-CoA + H2O. In terms of biological role, shows trans-enoyl-CoA hydratase/3-hydroxyacyl-CoA dehydratase activity. Displays a broad chain length specificity, with a predilection for the C8 to C12 substrates. This is 3-hydroxyacyl-thioester dehydratase X from Mycobacterium tuberculosis (strain ATCC 25618 / H37Rv).